Consider the following 240-residue polypeptide: tRNA (guanine-N(1)-)-methyltransferase (240 aa).

S-adenosyl-L-methionine contacts are provided by residues G110 and 129 to 134 (LGDFVL).

The protein belongs to the RNA methyltransferase TrmD family. In terms of assembly, homodimer.

It is found in the cytoplasm. The enzyme catalyses guanosine(37) in tRNA + S-adenosyl-L-methionine = N(1)-methylguanosine(37) in tRNA + S-adenosyl-L-homocysteine + H(+). In terms of biological role, specifically methylates guanosine-37 in various tRNAs. This is tRNA (guanine-N(1)-)-methyltransferase from Clostridium botulinum (strain 657 / Type Ba4).